The primary structure comprises 302 residues: MYRKHIISIPDFSREELELVVDTAARLKQSPRGDLLQDKLVASCFFEPSTRTRLSFETAVQRLGGNIIGFADGGNTSAKKGETLADSIKIISSYTDAVVMRHPKEGAARLASEFSAVPVINGGDGSNQHPTQTLLDLFSIRETQGRLDGLTVAFAGDLKYGRTVHSLAQALSLFGARFYFVSPEVLAMPDYICEELDEKGISYTVADSLEAVIPEVDVLYMTRVQRERFDEAEFRKIQGQYALRADMLKHARPGMKVLHPLPRVDEIAVDVDATPHAYYFEQAKNGVYARQALLSLVLNETV.

Positions 51 and 52 each coordinate carbamoyl phosphate. Lys-80 contacts L-aspartate. The carbamoyl phosphate site is built by Arg-101, His-129, and Gln-132. L-aspartate is bound by residues Arg-162 and Arg-223. Residues Leu-261 and Pro-262 each contribute to the carbamoyl phosphate site.

The protein belongs to the aspartate/ornithine carbamoyltransferase superfamily. ATCase family. In terms of assembly, heterododecamer (2C3:3R2) of six catalytic PyrB chains organized as two trimers (C3), and six regulatory PyrI chains organized as three dimers (R2).

The enzyme catalyses carbamoyl phosphate + L-aspartate = N-carbamoyl-L-aspartate + phosphate + H(+). Its pathway is pyrimidine metabolism; UMP biosynthesis via de novo pathway; (S)-dihydroorotate from bicarbonate: step 2/3. Catalyzes the condensation of carbamoyl phosphate and aspartate to form carbamoyl aspartate and inorganic phosphate, the committed step in the de novo pyrimidine nucleotide biosynthesis pathway. In Chromobacterium violaceum (strain ATCC 12472 / DSM 30191 / JCM 1249 / CCUG 213 / NBRC 12614 / NCIMB 9131 / NCTC 9757 / MK), this protein is Aspartate carbamoyltransferase catalytic subunit.